The following is a 229-amino-acid chain: MSKNSVIIVAAGKGKRMNSSISKQFLQIKNKPILYYTLNKFSTHESIDEIVLVALEDKIEVCSDIIDKYNINKVSKIVPGGKERQDSVYNGLKAVSKDCEVVLIHDAARPFVTSDIIENGIRYVNQYGAAACGVIPKDTVKIKDEKGFAIDTPNREDLFIVQTPQCFNYNIILDCHEKLKKHNKKVTDDTMVLENYGKSVYLYEGSYSNIKITTPEDLILGEQILEKLT.

This sequence belongs to the IspD/TarI cytidylyltransferase family. IspD subfamily.

It carries out the reaction 2-C-methyl-D-erythritol 4-phosphate + CTP + H(+) = 4-CDP-2-C-methyl-D-erythritol + diphosphate. The protein operates within isoprenoid biosynthesis; isopentenyl diphosphate biosynthesis via DXP pathway; isopentenyl diphosphate from 1-deoxy-D-xylulose 5-phosphate: step 2/6. Functionally, catalyzes the formation of 4-diphosphocytidyl-2-C-methyl-D-erythritol from CTP and 2-C-methyl-D-erythritol 4-phosphate (MEP). The sequence is that of 2-C-methyl-D-erythritol 4-phosphate cytidylyltransferase from Clostridium botulinum (strain 657 / Type Ba4).